Here is a 262-residue protein sequence, read N- to C-terminus: Hemin import ATP-binding protein HmuV (262 aa).

The ABC transporter domain maps to 5–242 (LEARKAGFAT…ELIGAVFDVE (238 aa)). 37–44 (GPNGAGKS) serves as a coordination point for ATP.

It belongs to the ABC transporter superfamily. Heme (hemin) importer (TC 3.A.1.14.5) family. As to quaternary structure, the complex is composed of two ATP-binding proteins (HmuV), two transmembrane proteins (HmuU) and a solute-binding protein (HmuT).

It localises to the cell inner membrane. In terms of biological role, part of the ABC transporter complex HmuTUV involved in hemin import. Responsible for energy coupling to the transport system. In Rhodopseudomonas palustris (strain HaA2), this protein is Hemin import ATP-binding protein HmuV.